We begin with the raw amino-acid sequence, 472 residues long: 6-phosphogluconate dehydrogenase, decarboxylating (472 aa).

Residues 10-15 (GMAVMG), 33-35 (NRT), 74-76 (VQA), and N102 each bind NADP(+). Substrate is bound by residues N102 and 128–130 (SGG). K184 serves as the catalytic Proton acceptor. 187–188 (HN) is a binding site for substrate. The active-site Proton donor is E191. 5 residues coordinate substrate: Y192, K262, R289, R447, and H453.

This sequence belongs to the 6-phosphogluconate dehydrogenase family. Homodimer.

It catalyses the reaction 6-phospho-D-gluconate + NADP(+) = D-ribulose 5-phosphate + CO2 + NADPH. It functions in the pathway carbohydrate degradation; pentose phosphate pathway; D-ribulose 5-phosphate from D-glucose 6-phosphate (oxidative stage): step 3/3. Its function is as follows. Catalyzes the oxidative decarboxylation of 6-phosphogluconate to ribulose 5-phosphate and CO(2), with concomitant reduction of NADP to NADPH. The sequence is that of 6-phosphogluconate dehydrogenase, decarboxylating (gnd) from Lactococcus lactis subsp. cremoris (strain MG1363).